A 90-amino-acid chain; its full sequence is Probable Fe(2+)-trafficking protein (90 aa).

This sequence belongs to the Fe(2+)-trafficking protein family.

Its function is as follows. Could be a mediator in iron transactions between iron acquisition and iron-requiring processes, such as synthesis and/or repair of Fe-S clusters in biosynthetic enzymes. In Thioalkalivibrio sulfidiphilus (strain HL-EbGR7), this protein is Probable Fe(2+)-trafficking protein.